A 143-amino-acid polypeptide reads, in one-letter code: MFLGTYTPKLDDKGRLTLPAKFRDALAGGLMVTKGQDHSLAVYPREEFTALARKAAAASRSDPEARAFVRGLAAGTDEQHADAQGRITLSADHRRYAGLSKDCVVIGSVDFLEIWDAQAWQTYVEANEENYSQATGIALGEIV.

SpoVT-AbrB domains lie at 5–47 (TYTP…PREE) and 76–119 (TDEQ…DAQA).

Belongs to the MraZ family. Forms oligomers.

It localises to the cytoplasm. It is found in the nucleoid. The sequence is that of Transcriptional regulator MraZ from Rhodococcus opacus (strain B4).